Consider the following 196-residue polypeptide: Aliphatic amidase regulator (196 aa).

Residues 129-190 (MAKLKQKTEQ…PILKIAQELL (62 aa)) enclose the ANTAR domain.

In terms of assembly, forms a complex with AmiC.

Functionally, positive controlling element of AmiE, the gene for aliphatic amidase. Acts as a transcriptional antitermination factor. It is thought to allow RNA polymerase read through a rho-independent transcription terminator between the AmiE promoter and gene. The polypeptide is Aliphatic amidase regulator (amiR) (Pseudomonas aeruginosa (strain ATCC 15692 / DSM 22644 / CIP 104116 / JCM 14847 / LMG 12228 / 1C / PRS 101 / PAO1)).